Consider the following 121-residue polypeptide: Large ribosomal subunit protein bL12 (121 aa).

This sequence belongs to the bacterial ribosomal protein bL12 family. As to quaternary structure, homodimer. Part of the ribosomal stalk of the 50S ribosomal subunit. Forms a multimeric L10(L12)X complex, where L10 forms an elongated spine to which 2 to 4 L12 dimers bind in a sequential fashion. Binds GTP-bound translation factors.

Forms part of the ribosomal stalk which helps the ribosome interact with GTP-bound translation factors. Is thus essential for accurate translation. This is Large ribosomal subunit protein bL12 from Mesomycoplasma hyopneumoniae (strain 232) (Mycoplasma hyopneumoniae).